Here is a 405-residue protein sequence, read N- to C-terminus: Phosphopentomutase (405 aa).

Mn(2+) contacts are provided by aspartate 10, aspartate 303, histidine 308, aspartate 344, histidine 345, and histidine 356.

Belongs to the phosphopentomutase family. The cofactor is Mn(2+).

It localises to the cytoplasm. The enzyme catalyses 2-deoxy-alpha-D-ribose 1-phosphate = 2-deoxy-D-ribose 5-phosphate. It catalyses the reaction alpha-D-ribose 1-phosphate = D-ribose 5-phosphate. It participates in carbohydrate degradation; 2-deoxy-D-ribose 1-phosphate degradation; D-glyceraldehyde 3-phosphate and acetaldehyde from 2-deoxy-alpha-D-ribose 1-phosphate: step 1/2. In terms of biological role, isomerase that catalyzes the conversion of deoxy-ribose 1-phosphate (dRib-1-P) and ribose 1-phosphate (Rib-1-P) to deoxy-ribose 5-phosphate (dRib-5-P) and ribose 5-phosphate (Rib-5-P), respectively. The chain is Phosphopentomutase from Shewanella sediminis (strain HAW-EB3).